The following is a 690-amino-acid chain: Xylosyl- and glucuronyltransferase LARGE2 (690 aa).

Topologically, residues 1–7 (MLPRGRP) are cytoplasmic. The helical; Signal-anchor for type II membrane protein transmembrane segment at 8-28 (RALGAALLLLLLLVVGFFLFG) threads the bilayer. Topologically, residues 29 to 690 (RDPEYGLGTT…TALQQSRSRA (662 aa)) are lumenal. 2 N-linked (GlcNAc...) asparagine glycosylation sites follow: Asn50 and Asn77. The segment at 67–342 (LHVAIVCAGY…FLGFDGKLLC (276 aa)) is xylosyltransferase activity. Residues Asp171 and Asp173 each contribute to the Mn(2+) site. Residue Asn201 is glycosylated (N-linked (GlcNAc...) asparagine). The interval 343 to 686 (RELFGCPNQF…LKYLTALQQS (344 aa)) is glucuronyltransferase activity. The Mn(2+) site is built by Asp491 and Asp493.

The protein in the C-terminal section; belongs to the glycosyltransferase 49 family. It in the N-terminal section; belongs to the glycosyltransferase 8 family. Interacts with B4GAT1. It depends on Mn(2+) as a cofactor.

It is found in the golgi apparatus membrane. The catalysed reaction is 3-O-[beta-D-GlcA-(1-&gt;3)-beta-D-Xyl-(1-&gt;4)-Rib-ol-P-Rib-ol-P-3-beta-D-GalNAc-(1-&gt;3)-beta-D-GlcNAc-(1-&gt;4)-(O-6-P-alpha-D-Man)]-Thr-[protein] + UDP-alpha-D-xylose = 3-O-[alpha-D-Xyl-(1-&gt;3)-beta-D-GlcA-(1-&gt;4)-beta-D-Xyl-(1-&gt;4)-Rib-ol-P-Rib-ol-P-3-beta-D-GalNAc-(1-&gt;3)-beta-D-GlcNAc-(1-&gt;4)-(O-6-P-alpha-D-Man)]-Thr-[protein] + UDP + H(+). It carries out the reaction 3-O-{(1-&gt;[3)-alpha-D-Xyl-(1-&gt;3)-beta-D-GlcA-(1-&gt;](n)-4)-beta-D-Xyl-(1-&gt;4)-Rib-ol-P-Rib-ol-P-3-beta-D-GalNAc-(1-&gt;3)-beta-D-GlcNAc-(1-&gt;4)-O-6-P-alpha-D-Man}-L-Thr-[protein] + UDP-alpha-D-glucuronate = 3-O-{beta-D-GlcA-(1-&gt;[3)-alpha-D-Xyl-(1-&gt;3)-beta-D-GlcA-(1-&gt;](n)-4)-beta-D-Xyl-(1-&gt;4)-Rib-ol-P-Rib-ol-P-3-beta-D-GalNAc-(1-&gt;3)-beta-D-GlcNAc-(1-&gt;4)-O-6-P-alpha-D-Man}-L-Thr-[protein] + UDP + H(+). It catalyses the reaction 3-O-{beta-D-GlcA-(1-&gt;[3)-alpha-D-Xyl-(1-&gt;3)-beta-D-GlcA-(1-&gt;](n)-4)-beta-D-Xyl-(1-&gt;4)-Rib-ol-P-Rib-ol-P-3-beta-D-GalNAc-(1-&gt;3)-beta-D-GlcNAc-(1-&gt;4)-O-6-P-alpha-D-Man}-L-Thr-[protein] + UDP-alpha-D-xylose = 3-O-{(1-&gt;[3)-alpha-D-Xyl-(1-&gt;3)-beta-D-GlcA-(1-&gt;](n+1)-4)-beta-D-Xyl-(1-&gt;4)-Rib-ol-P-Rib-ol-P-3-beta-D-GalNAc-(1-&gt;3)-beta-D-GlcNAc-(1-&gt;4)-O-6-P-alpha-D-Man}-L-Thr-[protein] + UDP + H(+). It participates in protein modification; protein glycosylation. In terms of biological role, bifunctional glycosyltransferase with both alpha-1,3-xylosyltransferase and beta-1,3-glucuronyltransferase activities involved in the maturation of alpha-dystroglycan (DAG1) by glycosylation leading to DAG1 binding to laminin G-like domain-containing extracellular proteins with high affinity and in a phosphorylated-O-mannosyl trisaccharide dependent manner. Elongates the glucuronyl-beta-1,4-xylose-beta disaccharide primer structure by adding repeating units [-3-Xylose-alpha-1,3-GlcA-beta-1-] to produce a heteropolysaccharide. Supports the maturation of DAG1 more effectively than LARGE1. In addition, can modify both heparan sulfate (HS)- and chondroitin/dermatan sulfate (CS/DS)-proteoglycans (PGs), namely GPC4, with a glycosaminoglycan (GAG)-like polysaccharide composed of xylose and glucuronic acid to confer laminin binding. The sequence is that of Xylosyl- and glucuronyltransferase LARGE2 from Rattus norvegicus (Rat).